Reading from the N-terminus, the 287-residue chain is Putative sugar uptake protein M6_Spy1874 (287 aa).

The next 10 membrane-spanning stretches (helical) occupy residues 4–26, 33–50, 55–72, 85–107, 117–134, 154–171, 181–200, 207–229, 234–256, and 268–285; these read IFYA…KIGG, LGMT…WLIV, TLQL…WSIG, VSVA…GVLV, FVVG…FYFS, FRAL…AVLF, SVIL…FMSF, YVIK…LLAA, LAIA…ILFL, and VVTG…LGVV.

This sequence belongs to the GRP transporter (TC 2.A.7.5) family.

The protein resides in the cell membrane. The protein is Putative sugar uptake protein M6_Spy1874 of Streptococcus pyogenes serotype M6 (strain ATCC BAA-946 / MGAS10394).